The sequence spans 364 residues: Phospho-N-acetylmuramoyl-pentapeptide-transferase (364 aa).

The next 10 membrane-spanning stretches (helical) occupy residues 3 to 23 (AILFGGGLALLVSLLGTRVAI), 51 to 71 (TMGGVVIILATVVGYFGAKLI), 80 to 100 (ALLLLFLLVGTGLVGFVDDFI), 116 to 136 (MIGLTVVALVFGILSLSSWLE), 154 to 174 (IGWITLPTVVVLLLIWLIIAA), 185 to 205 (LDGLATGASVMVFGAYMFVNI), 229 to 249 (PLDLAVVAAAITGACFGFLWW), 256 to 276 (IFMGDTGSLALGGALAGLAIL), 281 to 301 (LLLIILGGLFVMETVSVMLQV), and 341 to 361 (FWIITGICVAAGLGVFYAEWV).

Belongs to the glycosyltransferase 4 family. MraY subfamily. It depends on Mg(2+) as a cofactor.

The protein resides in the cell membrane. It catalyses the reaction UDP-N-acetyl-alpha-D-muramoyl-L-alanyl-gamma-D-glutamyl-meso-2,6-diaminopimeloyl-D-alanyl-D-alanine + di-trans,octa-cis-undecaprenyl phosphate = di-trans,octa-cis-undecaprenyl diphospho-N-acetyl-alpha-D-muramoyl-L-alanyl-D-glutamyl-meso-2,6-diaminopimeloyl-D-alanyl-D-alanine + UMP. It participates in cell wall biogenesis; peptidoglycan biosynthesis. Functionally, catalyzes the initial step of the lipid cycle reactions in the biosynthesis of the cell wall peptidoglycan: transfers peptidoglycan precursor phospho-MurNAc-pentapeptide from UDP-MurNAc-pentapeptide onto the lipid carrier undecaprenyl phosphate, yielding undecaprenyl-pyrophosphoryl-MurNAc-pentapeptide, known as lipid I. The sequence is that of Phospho-N-acetylmuramoyl-pentapeptide-transferase from Nocardioides sp. (strain ATCC BAA-499 / JS614).